Consider the following 353-residue polypeptide: tRNA N6-adenosine threonylcarbamoyltransferase (353 aa).

Fe cation-binding residues include histidine 115 and histidine 119. Residues 138–142 (LVSGG), aspartate 171, glycine 184, and asparagine 276 each bind substrate. Residue aspartate 304 participates in Fe cation binding.

It belongs to the KAE1 / TsaD family. The cofactor is Fe(2+).

The protein localises to the cytoplasm. The catalysed reaction is L-threonylcarbamoyladenylate + adenosine(37) in tRNA = N(6)-L-threonylcarbamoyladenosine(37) in tRNA + AMP + H(+). In terms of biological role, required for the formation of a threonylcarbamoyl group on adenosine at position 37 (t(6)A37) in tRNAs that read codons beginning with adenine. Is involved in the transfer of the threonylcarbamoyl moiety of threonylcarbamoyl-AMP (TC-AMP) to the N6 group of A37, together with TsaE and TsaB. TsaD likely plays a direct catalytic role in this reaction. The polypeptide is tRNA N6-adenosine threonylcarbamoyltransferase (Xanthomonas euvesicatoria pv. vesicatoria (strain 85-10) (Xanthomonas campestris pv. vesicatoria)).